The following is a 265-amino-acid chain: Enolase-phosphatase E1 (265 aa).

Residues aspartate 18 and glutamate 20 each contribute to the Mg(2+) site. Residues 144–145 and lysine 188 each bind substrate; that span reads SS. Aspartate 215 provides a ligand contact to Mg(2+).

Belongs to the HAD-like hydrolase superfamily. MasA/MtnC family. As to quaternary structure, monomer. The cofactor is Mg(2+).

The protein localises to the cytoplasm. The protein resides in the nucleus. It catalyses the reaction 5-methylsulfanyl-2,3-dioxopentyl phosphate + H2O = 1,2-dihydroxy-5-(methylsulfanyl)pent-1-en-3-one + phosphate. It functions in the pathway amino-acid biosynthesis; L-methionine biosynthesis via salvage pathway; L-methionine from S-methyl-5-thio-alpha-D-ribose 1-phosphate: step 3/6. Its pathway is amino-acid biosynthesis; L-methionine biosynthesis via salvage pathway; L-methionine from S-methyl-5-thio-alpha-D-ribose 1-phosphate: step 4/6. Functionally, bifunctional enzyme that catalyzes the enolization of 2,3-diketo-5-methylthiopentyl-1-phosphate (DK-MTP-1-P) into the intermediate 2-hydroxy-3-keto-5-methylthiopentenyl-1-phosphate (HK-MTPenyl-1-P), which is then dephosphorylated to form the acireductone 1,2-dihydroxy-3-keto-5-methylthiopentene (DHK-MTPene). The polypeptide is Enolase-phosphatase E1 (Candida albicans (strain SC5314 / ATCC MYA-2876) (Yeast)).